The primary structure comprises 1115 residues: DNA-directed RNA polymerase subunit beta (1115 aa).

Residues histidine 1084–glutamate 1115 are disordered. A compositionally biased stretch (acidic residues) spans glutamate 1088–glutamate 1115.

This sequence belongs to the RNA polymerase beta chain family. The RNAP catalytic core consists of 2 alpha, 1 beta, 1 beta' and 1 omega subunit. When a sigma factor is associated with the core the holoenzyme is formed, which can initiate transcription.

The enzyme catalyses RNA(n) + a ribonucleoside 5'-triphosphate = RNA(n+1) + diphosphate. DNA-dependent RNA polymerase catalyzes the transcription of DNA into RNA using the four ribonucleoside triphosphates as substrates. The chain is DNA-directed RNA polymerase subunit beta from Desulfitobacterium hafniense (strain DSM 10664 / DCB-2).